The chain runs to 232 residues: Peptidyl-prolyl cis-trans isomerase FKBP18, chloroplastic (232 aa).

Residues G108–T226 form the PPIase FKBP-type domain.

It belongs to the FKBP-type PPIase family.

It is found in the plastid. The protein resides in the chloroplast thylakoid lumen. It catalyses the reaction [protein]-peptidylproline (omega=180) = [protein]-peptidylproline (omega=0). PPIases accelerate the folding of proteins. It catalyzes the cis-trans isomerization of proline imidic peptide bonds in oligopeptides. The chain is Peptidyl-prolyl cis-trans isomerase FKBP18, chloroplastic (FKBP18) from Arabidopsis thaliana (Mouse-ear cress).